A 367-amino-acid polypeptide reads, in one-letter code: UDP-N-acetylglucosamine--N-acetylmuramyl-(pentapeptide) pyrophosphoryl-undecaprenol N-acetylglucosamine transferase (367 aa).

Residues 15–17 (TGG), asparagine 127, arginine 163, serine 191, isoleucine 249, and glutamine 294 contribute to the UDP-N-acetyl-alpha-D-glucosamine site.

Belongs to the glycosyltransferase 28 family. MurG subfamily.

The protein resides in the cell inner membrane. The catalysed reaction is di-trans,octa-cis-undecaprenyl diphospho-N-acetyl-alpha-D-muramoyl-L-alanyl-D-glutamyl-meso-2,6-diaminopimeloyl-D-alanyl-D-alanine + UDP-N-acetyl-alpha-D-glucosamine = di-trans,octa-cis-undecaprenyl diphospho-[N-acetyl-alpha-D-glucosaminyl-(1-&gt;4)]-N-acetyl-alpha-D-muramoyl-L-alanyl-D-glutamyl-meso-2,6-diaminopimeloyl-D-alanyl-D-alanine + UDP + H(+). Its pathway is cell wall biogenesis; peptidoglycan biosynthesis. Its function is as follows. Cell wall formation. Catalyzes the transfer of a GlcNAc subunit on undecaprenyl-pyrophosphoryl-MurNAc-pentapeptide (lipid intermediate I) to form undecaprenyl-pyrophosphoryl-MurNAc-(pentapeptide)GlcNAc (lipid intermediate II). In Burkholderia lata (strain ATCC 17760 / DSM 23089 / LMG 22485 / NCIMB 9086 / R18194 / 383), this protein is UDP-N-acetylglucosamine--N-acetylmuramyl-(pentapeptide) pyrophosphoryl-undecaprenol N-acetylglucosamine transferase.